Reading from the N-terminus, the 351-residue chain is MKQEPHRQSEEKEKPKGPMAVEREHHTSLSSGTTMTASTGDESTNSRPVESSQTEKSLSLRIRILKQLGFDDIQELNACDTGLVEQFLNVRLINDTKELEKIRESNLAKLNQIIDKCMESDKISDSTLNKILDMSMNRDTNNDNNNHLTIPSPITTKKRKINASELASPRGHRRYRSDIPTVSEVETGVGYPQIHQQPGAYTLPMPANQWMSNPYMQPPQPQVQQIMPQYLYPPGMGPQAQLPTMSSNSESQTPVMSSQFLSLNQHGLYQQNIGAHPVMSMGPQANIYGQQHQPQPGQERDQSRKSFSHRRSQSANISMANFRSPMRNPQPASSQRPVNFLIHTPKHPPPT.

Positions 1 to 27 (MKQEPHRQSEEKEKPKGPMAVEREHHT) are enriched in basic and acidic residues. The tract at residues 1 to 56 (MKQEPHRQSEEKEKPKGPMAVEREHHTSLSSGTTMTASTGDESTNSRPVESSQTEK) is disordered. Over residues 28–56 (SLSSGTTMTASTGDESTNSRPVESSQTEK) the composition is skewed to polar residues. Ser-152 and Ser-168 each carry phosphoserine. Disordered regions lie at residues 237 to 256 (GPQA…TPVM) and 280 to 351 (SMGP…PPPT). Polar residues-rich tracts occupy residues 241 to 256 (QLPT…TPVM) and 287 to 296 (IYGQQHQPQP). Ser-314 bears the Phosphoserine mark.

It belongs to the POG1 family. In terms of processing, phosphorylated by CDC28.

The protein resides in the nucleus. In terms of biological role, transcriptional activator which promotes cell cycle recovery with CLN2, after pheromone induced G1 arrest, probably inhibiting the ability of STE20 to activate the pheromone response pathway. Binds the promoters of genes that function in cell cycle regulation, cytoskeletal organization, and spindle assembly. May also be involved in stress-resistance. This chain is Transcriptional activator POG1 (POG1), found in Saccharomyces cerevisiae (strain YJM789) (Baker's yeast).